The sequence spans 304 residues: tRNA-uridine aminocarboxypropyltransferase 1 (304 aa).

Serine 2 is subject to N-acetylserine. The short motif at 206-209 (DSTW) is the DXTW element.

Belongs to the TDD superfamily. DTWD1 family.

The protein resides in the nucleus. It carries out the reaction a uridine in tRNA + S-adenosyl-L-methionine = a 3-[(3S)-3-amino-3-carboxypropyl]uridine in tRNA + S-methyl-5'-thioadenosine + H(+). Catalyzes the formation of 3-(3-amino-3-carboxypropyl)uridine (acp3U) at position 20 in the D-loop of several cytoplasmic tRNAs (acp3U(20)). The chain is tRNA-uridine aminocarboxypropyltransferase 1 from Homo sapiens (Human).